We begin with the raw amino-acid sequence, 199 residues long: Thymidine kinase (199 aa).

ATP contacts are provided by residues 23 to 30 and 95 to 98; these read GSMFSGKT and DEAQ. The Proton acceptor role is filled by E96. The Zn(2+) site is built by C152, C155, C184, and C187.

The protein belongs to the thymidine kinase family. In terms of assembly, homotetramer.

Its subcellular location is the cytoplasm. The enzyme catalyses thymidine + ATP = dTMP + ADP + H(+). The sequence is that of Thymidine kinase from Bacteroides thetaiotaomicron (strain ATCC 29148 / DSM 2079 / JCM 5827 / CCUG 10774 / NCTC 10582 / VPI-5482 / E50).